A 362-amino-acid polypeptide reads, in one-letter code: uncharacterized protein (362 aa).

Ala2 carries the N-acetylalanine modification.

The protein belongs to the Gfo/Idh/MocA family. As to quaternary structure, homodimer.

This is an uncharacterized protein from Arabidopsis thaliana (Mouse-ear cress).